The following is a 312-amino-acid chain: MDGDNQSENSQFLLLGISESPEQQRILFWMFLSMYLVTVLGNVLIILAISSDSHLHTPMYFFLANLSFTDLFFVTNTIPKMLVNFQSQNKAISYAGCLTQLYFLVSLVTLDNLILAVMAYDRYVATCCPLHYVTAMSPGLCVLLLSLCWGLSVLYGLLLTFLLTRVTFCGPREIHYLFCDMYILLWLACSNTHIIHTALIATGCFIFLTPLGFMTTSYVRIVRTILQMPSASKKYKTFSTCASHLGVVSLFYGTLAMVYLQPLHTYSMKDSVATVMYAVLTPMMNPFIYRLRNKDMHGAPGRVLWRPFQRPK.

Residues 1-25 lie on the Extracellular side of the membrane; sequence MDGDNQSENSQFLLLGISESPEQQR. N5 carries an N-linked (GlcNAc...) asparagine glycan. A helical membrane pass occupies residues 26-49; it reads ILFWMFLSMYLVTVLGNVLIILAI. The Cytoplasmic portion of the chain corresponds to 50 to 57; that stretch reads SSDSHLHT. The helical transmembrane segment at 58 to 79 threads the bilayer; the sequence is PMYFFLANLSFTDLFFVTNTIP. Residues 80-100 lie on the Extracellular side of the membrane; it reads KMLVNFQSQNKAISYAGCLTQ. A disulfide bridge links C97 with C189. The chain crosses the membrane as a helical span at residues 101–120; that stretch reads LYFLVSLVTLDNLILAVMAY. Residues 121–140 lie on the Cytoplasmic side of the membrane; it reads DRYVATCCPLHYVTAMSPGL. The helical transmembrane segment at 141–158 threads the bilayer; the sequence is CVLLLSLCWGLSVLYGLL. The Extracellular segment spans residues 159–196; the sequence is LTFLLTRVTFCGPREIHYLFCDMYILLWLACSNTHIIH. A helical membrane pass occupies residues 197-220; sequence TALIATGCFIFLTPLGFMTTSYVR. The Cytoplasmic portion of the chain corresponds to 221–237; the sequence is IVRTILQMPSASKKYKT. The chain crosses the membrane as a helical span at residues 238–260; sequence FSTCASHLGVVSLFYGTLAMVYL. Residues 261–271 lie on the Extracellular side of the membrane; that stretch reads QPLHTYSMKDS. A helical membrane pass occupies residues 272–291; sequence VATVMYAVLTPMMNPFIYRL. The Cytoplasmic segment spans residues 292-312; it reads RNKDMHGAPGRVLWRPFQRPK.

It belongs to the G-protein coupled receptor 1 family.

The protein localises to the cell membrane. Functionally, odorant receptor. The protein is Olfactory receptor 1D5 (OR1D5) of Homo sapiens (Human).